The following is a 718-amino-acid chain: Calpastatin (718 aa).

Disordered regions lie at residues 1–189 and 210–238; these read MNPA…MSST and EKKT…LSSD. Residues 20-29 are compositionally biased toward basic residues; that stretch reads PHSKKRHRRQ. Basic and acidic residues-rich tracts occupy residues 30-61 and 68-104; these read DAKT…EHTK and HASD…KPQD. K32 is covalently cross-linked (Glycyl lysine isopeptide (Lys-Gly) (interchain with G-Cter in SUMO2)). K49 carries the post-translational modification N6-acetyllysine. S86 is modified (phosphoserine). A compositionally biased stretch (low complexity) spans 114-124; that stretch reads AAGTTAAPGKA. Phosphoserine is present on residues S133, S222, and S243. Residues 170–222 form an Inhibitory domain 1 repeat; sequence TQEDSTAYTGPEISDPMSSTYIEELGKREVTIPPKYRELLEKKTGVAGPPPDS. Disordered stretches follow at residues 266–291 and 320–509; these read ESAK…AMSD and EAKR…QLPA. S290 carries the post-translational modification Blocked amino end (Ser); in form erythrocyte. The Inhibitory domain 2 repeat unit spans residues 307-359; it reads EPELDLSSIKEVAEAKRKEEKVEKCGEDDETVPAEYRLKPATDKDGKPLLPEP. Basic and acidic residues-rich tracts occupy residues 320 to 331, 342 to 377, and 384 to 399; these read EAKRKEEKVEKC, YRLK…ELSK, and SNEK…EESK. A phosphoserine mark is found at S367, S369, and S376. Positions 400–411 are enriched in low complexity; it reads AAVPAPVAEAVP. S444 carries the post-translational modification Phosphoserine. The segment covering 446 to 496 has biased composition (basic and acidic residues); sequence GRKEADPEEGKPVADKIKEKSKEEEREKLGEKEETIPPDYRLEEAKDKDGK. The Inhibitory domain 3 repeat unit spans residues 450-503; the sequence is ADPEEGKPVADKIKEKSKEEEREKLGEKEETIPPDYRLEEAKDKDGKPLLPSEP. S520, S531, S579, and S581 each carry phosphoserine. The segment at 543 to 718 is disordered; sequence VSEVVSQSPA…KPKANEKNAS (176 aa). Over residues 566-579 the composition is skewed to basic and acidic residues; that stretch reads PSNKELDDALDKLS. An Inhibitory domain 4 repeat occupies 587 to 640; it reads PDPDENKPMEDKVKERAKKEHKDKLGERDDTIPPEYRHLLDQGEQDKPEKPPTK. Basic and acidic residues-rich tracts occupy residues 587–650 and 706–718; these read PDPD…KPAG and ETSK…KNAS.

It belongs to the protease inhibitor I27 (calpastatin) family.

Its function is as follows. Specific inhibition of calpain (calcium-dependent cysteine protease). Plays a key role in postmortem tenderization of meat and have been proposed to be involved in muscle protein degradation in living tissue. The chain is Calpastatin (CAST) from Oryctolagus cuniculus (Rabbit).